A 299-amino-acid chain; its full sequence is ATP synthase gamma chain (299 aa).

Belongs to the ATPase gamma chain family. F-type ATPases have 2 components, CF(1) - the catalytic core - and CF(0) - the membrane proton channel. CF(1) has five subunits: alpha(3), beta(3), gamma(1), delta(1), epsilon(1). CF(0) has three main subunits: a, b and c.

Its subcellular location is the cell membrane. In terms of biological role, produces ATP from ADP in the presence of a proton gradient across the membrane. The gamma chain is believed to be important in regulating ATPase activity and the flow of protons through the CF(0) complex. The protein is ATP synthase gamma chain of Clavibacter michiganensis subsp. michiganensis (strain NCPPB 382).